The primary structure comprises 384 residues: Alpha-2B adrenergic receptor (384 aa).

A helical membrane pass occupies residues 1–25; that stretch reads AIAAVTTFLILFTVFGNALVILAVL. Residues 26-36 lie on the Cytoplasmic side of the membrane; sequence TSRSLRAPQNL. The chain crosses the membrane as a helical span at residues 37–62; that stretch reads FLVSLAAADILVATLIXPFSLANELL. Topologically, residues 63-72 are extracellular; it reads GYWYFWHTWC. The cysteines at positions 72 and 151 are disulfide-linked. The helical transmembrane segment at 73-95 threads the bilayer; that stretch reads EVYLALXVLXCTSSIVHLCAISL. Residues 96-117 lie on the Cytoplasmic side of the membrane; it reads DRYWAVSRALEYNSKRTPRRIX. A helical transmembrane segment spans residues 118–140; sequence GIILTVWLIAAAISLPPLIYKGD. The Extracellular segment spans residues 141 to 156; it reads QGPQPHGRPQCRLNQE. A helical membrane pass occupies residues 157 to 180; it reads AWYILSSSIGSFFAPCLIMILVYL. The Cytoplasmic segment spans residues 181–348; sequence RIYLIAKRRN…LTREKRFTFV (168 aa). The disordered stretch occupies residues 193–306; sequence GPRAQGASKG…SXGSPQLQQP (114 aa). Residues 288-306 are compositionally biased toward low complexity; sequence PEALPASPASXGSPQLQQP. A helical membrane pass occupies residues 349 to 372; sequence LAVVIGVXVLCWFPFFXSYSLGAI. The Extracellular segment spans residues 373 to 381; it reads CPQHCTVXH. The helical transmembrane segment at 382-384 threads the bilayer; that stretch reads GLF.

The protein belongs to the G-protein coupled receptor 1 family. Adrenergic receptor subfamily. ADRA2B sub-subfamily. As to quaternary structure, interacts with RAB26. Interacts with PPP1R9B. Interacts with GGA1, GGA2 and GGA3.

The protein localises to the cell membrane. Alpha-2 adrenergic receptors mediate the catecholamine-induced inhibition of adenylate cyclase through the action of G proteins. The chain is Alpha-2B adrenergic receptor (ADRA2B) from Echinops telfairi (Lesser hedgehog tenrec).